Consider the following 238-residue polypeptide: Type III pantothenate kinase (238 aa).

Residue Asp-6–Lys-13 coordinates ATP. Residues Tyr-90 and Gly-97–Arg-100 each bind substrate. Asp-99 acts as the Proton acceptor in catalysis. Thr-122 is a binding site for ATP. Thr-172 is a binding site for substrate.

This sequence belongs to the type III pantothenate kinase family. In terms of assembly, homodimer. NH4(+) is required as a cofactor. It depends on K(+) as a cofactor.

Its subcellular location is the cytoplasm. It carries out the reaction (R)-pantothenate + ATP = (R)-4'-phosphopantothenate + ADP + H(+). Its pathway is cofactor biosynthesis; coenzyme A biosynthesis; CoA from (R)-pantothenate: step 1/5. In terms of biological role, catalyzes the phosphorylation of pantothenate (Pan), the first step in CoA biosynthesis. The protein is Type III pantothenate kinase of Dechloromonas aromatica (strain RCB).